We begin with the raw amino-acid sequence, 241 residues long: MTDQSRTRFPQFYITAPQPCPYLLGRYEKKVFTHLLGDEPVSLNNALTQAGFRRSQNIAYRPACDDCQACVSVRVVVKDFQPGRTFRRILARNADLRSTPQPARATDEQYTLLRRYLDARHAEGGMADMSRLDYVAMVEDTTIATRLFEYRRPDGTLTAAALTDMLDDGLSMVYSFYEPGEPGRSLGTWMVLEHIERARALSLPYVYLGYWVDGSRKMAYKTRFRPLEALTMEGWRAHPAS.

Belongs to the R-transferase family. Bpt subfamily.

The protein resides in the cytoplasm. The enzyme catalyses N-terminal L-glutamyl-[protein] + L-leucyl-tRNA(Leu) = N-terminal L-leucyl-L-glutamyl-[protein] + tRNA(Leu) + H(+). The catalysed reaction is N-terminal L-aspartyl-[protein] + L-leucyl-tRNA(Leu) = N-terminal L-leucyl-L-aspartyl-[protein] + tRNA(Leu) + H(+). Functions in the N-end rule pathway of protein degradation where it conjugates Leu from its aminoacyl-tRNA to the N-termini of proteins containing an N-terminal aspartate or glutamate. This chain is Aspartate/glutamate leucyltransferase, found in Parvibaculum lavamentivorans (strain DS-1 / DSM 13023 / NCIMB 13966).